The chain runs to 298 residues: Pyridoxal 5'-phosphate synthase subunit PdxS (298 aa).

Asp-24 contributes to the D-ribose 5-phosphate binding site. The active-site Schiff-base intermediate with D-ribose 5-phosphate is the Lys-81. Gly-153 serves as a coordination point for D-ribose 5-phosphate. Arg-165 contributes to the D-glyceraldehyde 3-phosphate binding site. D-ribose 5-phosphate-binding positions include Gly-214 and 235-236; that span reads GS.

The protein belongs to the PdxS/SNZ family. In terms of assembly, in the presence of PdxT, forms a dodecamer of heterodimers.

The enzyme catalyses aldehydo-D-ribose 5-phosphate + D-glyceraldehyde 3-phosphate + L-glutamine = pyridoxal 5'-phosphate + L-glutamate + phosphate + 3 H2O + H(+). The protein operates within cofactor biosynthesis; pyridoxal 5'-phosphate biosynthesis. Its function is as follows. Catalyzes the formation of pyridoxal 5'-phosphate from ribose 5-phosphate (RBP), glyceraldehyde 3-phosphate (G3P) and ammonia. The ammonia is provided by the PdxT subunit. Can also use ribulose 5-phosphate and dihydroxyacetone phosphate as substrates, resulting from enzyme-catalyzed isomerization of RBP and G3P, respectively. This Halalkalibacterium halodurans (strain ATCC BAA-125 / DSM 18197 / FERM 7344 / JCM 9153 / C-125) (Bacillus halodurans) protein is Pyridoxal 5'-phosphate synthase subunit PdxS.